Consider the following 580-residue polypeptide: TRAF-type zinc finger domain-containing protein 1 (580 aa).

Alanine 2 carries the N-acetylalanine modification. Residues 27–103 form a TRAF-type zinc finger; the sequence is IHEIHCQRNI…DLELSVVKLK (77 aa). 10 positions are modified to phosphoserine: serine 278, serine 320, serine 326, serine 327, serine 409, serine 415, serine 430, serine 450, serine 469, and serine 532. 3 disordered regions span residues 395 to 453, 468 to 509, and 524 to 580; these read TANH…SPNR, PSGP…ASGH, and FAPS…EEEE. The segment covering 407 to 417 has biased composition (polar residues); it reads QDSQPENTSAE.

As to quaternary structure, interacts with MAVS, TICAM1, TRAF1, TRAF2, TRAF3 and TRAF6. Expressed in skeletal muscle, brain, liver, kidney, spleen and bone marrow. Expression depends on STAT1.

Its function is as follows. Negative feedback regulator that controls excessive innate immune responses. Regulates both Toll-like receptor 4 (TLR4) and DDX58/RIG1-like helicases (RLH) pathways. May inhibit the LTR pathway by direct interaction with TRAF6 and attenuation of NF-kappa-B activation. May negatively regulate the RLH pathway downstream from MAVS and upstream of NF-kappa-B and IRF3. This chain is TRAF-type zinc finger domain-containing protein 1 (Trafd1), found in Mus musculus (Mouse).